The following is a 702-amino-acid chain: MA3 DOMAIN-CONTAINING TRANSLATION REGULATORY FACTOR 1 (702 aa).

The disordered stretch occupies residues 39 to 66; sequence LNIKSPTGGKGPVAGIPNRHVRRTHSGK. A compositionally biased stretch (basic residues) spans 57–66; that stretch reads RHVRRTHSGK. In terms of domain architecture, MI 1 spans 122-243; the sequence is DYKKSVVSII…PPVFLVRSKK (122 aa). The Nuclear localization signal 1 signature appears at 273–280; sequence EKKWGGST. MI domains lie at 286–407, 420–541, and 583–702; these read ETKK…TSDQ, QYKK…DIST, and DAKD…SATQ. Residues 458–465 carry the Nuclear localization signal 2 motif; that stretch reads LKRLITLA.

Belongs to the PDCD4 family. In terms of assembly, binds to EIF4A1, S6K1 and S6K2. The association with ribosomes is modulated by cellular energy status and TOR activity. Post-translationally, phosphorylation by S6 kinases (e.g. S6K1 and S6K2) is modulated by cellular energy status and TOR activity. Mostly expressed in vegetative tissues, such as leaves, roots and stems, and, to a lower extent, in reproductive tissues, such as flower buds and flowers.

It localises to the nucleus. Its subcellular location is the cytoplasm. The protein localises to the cytosol. Functionally, involved in target of rapamycin (TOR)-regulated translation control, especially under energy-deficient conditions. This is MA3 DOMAIN-CONTAINING TRANSLATION REGULATORY FACTOR 1 from Arabidopsis thaliana (Mouse-ear cress).